The primary structure comprises 97 residues: UPF0250 protein RSc0326 (97 aa).

This sequence belongs to the UPF0250 family.

This chain is UPF0250 protein RSc0326, found in Ralstonia nicotianae (strain ATCC BAA-1114 / GMI1000) (Ralstonia solanacearum).